Reading from the N-terminus, the 552-residue chain is Rhodopsin kinase GRK7 (552 aa).

Serine 36 carries the post-translational modification Phosphoserine; by PKA. The 121-residue stretch at 56–176 (FHSLCEQQPI…LASPFYDKFL (121 aa)) folds into the RGS domain. The Protein kinase domain occupies 191 to 454 (FEEFRVLGKG…SDDPRKHHFF (264 aa)). Residues 197–205 (LGKGGFGEV) and lysine 220 each bind ATP. Residue aspartate 316 is the Proton acceptor of the active site. The 66-residue stretch at 455-520 (KTINFPRLEA…GAVPIAWQEE (66 aa)) folds into the AGC-kinase C-terminal domain. A Cysteine methyl ester modification is found at cysteine 549. Residue cysteine 549 is the site of S-geranylgeranyl cysteine attachment. Positions 550 to 552 (LLL) are cleaved as a propeptide — removed in mature form.

The protein belongs to the protein kinase superfamily. AGC Ser/Thr protein kinase family. GPRK subfamily. As to quaternary structure, interacts (when prenylated) with PDE6D; this promotes release from membranes. Autophosphorylated in vitro at Ser-490. Phosphorylation at Ser-36 is regulated by light and activated by cAMP.

The protein localises to the membrane. The enzyme catalyses L-threonyl-[rhodopsin] + ATP = O-phospho-L-threonyl-[rhodopsin] + ADP + H(+). It catalyses the reaction L-seryl-[rhodopsin] + ATP = O-phospho-L-seryl-[rhodopsin] + ADP + H(+). Inhibited by phosphorylation of Ser-36. Its function is as follows. Retina-specific kinase involved in the shutoff of the photoresponse and adaptation to changing light conditions via cone opsin phosphorylation, including rhodopsin (RHO). This Bos taurus (Bovine) protein is Rhodopsin kinase GRK7 (GRK7).